The chain runs to 97 residues: Large ribosomal subunit protein eL21 (97 aa).

Residues 1–26 are disordered; sequence MQKSEGFRSKTRYKLQKHPRQKGMAP. Basic residues predominate over residues 9–21; it reads SKTRYKLQKHPRQ.

Belongs to the eukaryotic ribosomal protein eL21 family.

The chain is Large ribosomal subunit protein eL21 from Methanococcus maripaludis (strain C6 / ATCC BAA-1332).